Consider the following 212-residue polypeptide: Proteasome subunit beta 2 (212 aa).

A propeptide spans 1–15 (MLHHPGTGQLRALKG) (removed in mature form; by autocatalysis). T16 (nucleophile) is an active-site residue.

It belongs to the peptidase T1B family. The 20S proteasome core is composed of 14 alpha and 14 beta subunits that assemble into four stacked heptameric rings, resulting in a barrel-shaped structure. The two inner rings, each composed of seven catalytic beta subunits, are sandwiched by two outer rings, each composed of seven alpha subunits. The catalytic chamber with the active sites is on the inside of the barrel. Has a gated structure, the ends of the cylinder being occluded by the N-termini of the alpha-subunits. Is capped at one or both ends by the proteasome regulatory ATPase, PAN.

The protein localises to the cytoplasm. The enzyme catalyses Cleavage of peptide bonds with very broad specificity.. With respect to regulation, the formation of the proteasomal ATPase PAN-20S proteasome complex, via the docking of the C-termini of PAN into the intersubunit pockets in the alpha-rings, triggers opening of the gate for substrate entry. Interconversion between the open-gate and close-gate conformations leads to a dynamic regulation of the 20S proteasome proteolysis activity. In terms of biological role, component of the proteasome core, a large protease complex with broad specificity involved in protein degradation. The protein is Proteasome subunit beta 2 of Hyperthermus butylicus (strain DSM 5456 / JCM 9403 / PLM1-5).